Here is a 118-residue protein sequence, read N- to C-terminus: Large ribosomal subunit protein uL22c (118 aa).

This sequence belongs to the universal ribosomal protein uL22 family. In terms of assembly, part of the 50S ribosomal subunit.

The protein localises to the plastid. Its subcellular location is the organellar chromatophore. Its function is as follows. This protein binds specifically to 23S rRNA. The globular domain of the protein is located near the polypeptide exit tunnel on the outside of the subunit, while an extended beta-hairpin is found that lines the wall of the exit tunnel in the center of the 70S ribosome. The chain is Large ribosomal subunit protein uL22c (rpl22) from Paulinella chromatophora.